The chain runs to 1325 residues: SCAN domain-containing protein 3 (1325 aa).

The SCAN box domain occupies 52–134 (RQRFRQFCYQ…TLLEDLEREL (83 aa)). Residues 246–275 (KAKYCQLIKEVKEAKAKAKKESVDYRRLAR) adopt a coiled-coil conformation. Residues 366-526 (KSIKEVSSRC…TPCESAFSSE (161 aa)) enclose the Integrase catalytic domain. A coiled-coil region spans residues 542 to 568 (ASLHTENELDQADKELENTLRAQYEEN).

In terms of tissue distribution, weakly expressed in the lung (at protein level).

It localises to the nucleus. The sequence is that of SCAN domain-containing protein 3 from Homo sapiens (Human).